A 540-amino-acid polypeptide reads, in one-letter code: Chaperonin GroEL 4 (540 aa).

Residues 29–32, 86–90, Gly413, 477–479, and Asp493 contribute to the ATP site; these read TLGP, DGTTT, and NAA.

This sequence belongs to the chaperonin (HSP60) family. In terms of assembly, forms a cylinder of 14 subunits composed of two heptameric rings stacked back-to-back. Interacts with the co-chaperonin GroES.

It localises to the cytoplasm. The enzyme catalyses ATP + H2O + a folded polypeptide = ADP + phosphate + an unfolded polypeptide.. In terms of biological role, together with its co-chaperonin GroES, plays an essential role in assisting protein folding. The GroEL-GroES system forms a nano-cage that allows encapsulation of the non-native substrate proteins and provides a physical environment optimized to promote and accelerate protein folding. The protein is Chaperonin GroEL 4 of Frankia casuarinae (strain DSM 45818 / CECT 9043 / HFP020203 / CcI3).